The sequence spans 204 residues: Protein C (204 aa).

A disordered region spans residues 1 to 78 (MPSFLRGILK…TEQSQRRPKI (78 aa)). Basic and acidic residues predominate over residues 10–20 (KPKERHHENKN). The segment covering 25–34 (SSDSLTSSYP) has biased composition (low complexity).

Belongs to the respirovirus protein C family.

The sequence is that of Protein C (P/V/C) from Homo sapiens (Human).